The primary structure comprises 711 residues: MAEKTVYRVDGLSCTNCAAKFERNVKEIEGVTEAIVNFGASKITVTGEASIQQVEQAGAFEHLKIIPEKESFTDPEHFTDHQSFIRKNWRLLLSGLFIAVGYASQIMNGEDFYLTNALFIFAIFIGGYSLFKEGFKNLLKFEFTMETLMTIAIIGAAFIGEWAEGSIVVILFAVSEALERYSMDKARQSIRSLMDIAPKEALVRRSGTDRMVHVDDIQIGDIMIIKPGQKIAMDGHVVKGYSAVNQAAITGESIPVEKNIDDSVFAGTLNEEGLLEVAVTKRVEDTTISKIIHLVEEAQGERAPAQAFVDTFAKYYTPAIIVIAALIATVPPLLFGGNWETWVYQGLSVLVVGCPCALVVSTPVAIVTAIGNAAKNGVLVKGGVYLEEIGGLKAIAFDKTGTLTKGVPVVTDYIELTEATNIQHNKNYIIMAALEQLSQHPLASAIIKYGETREMDLTSINVNDFTSITGKGIRGTVDGNTYYVGSPVLFKELLASQFTDSIHRQVSDLQLKGKTAMLFGTNQKLISIVAVADEVRSSSQHVIKRLHELGIEKTIMLTGDNQATAQAIGQQVGVSEIEGELMPQDKLDYIKQLKINFGKVAMVGDGINDAPALAAATVGIAMGGAGTDTAIETADVALMGDDLQKLPFTVKLSRKTLQIIKQNITFSLVIKLIALLLVIPGWLTLWIAIMADMGATLLVTLNGLRLMKVKD.

One can recognise an HMA domain in the interval 3-66; it reads EKTVYRVDGL…AGAFEHLKII (64 aa). The Cd(2+) site is built by cysteine 14 and cysteine 17. A run of 5 helical transmembrane segments spans residues 89–109, 111–131, 151–171, 317–337, and 347–367; these read WRLL…IMNG, DFYL…YSLF, IAII…VVIL, TPAI…LFGG, and LSVL…VAIV. Aspartate 398 (4-aspartylphosphate intermediate) is an active-site residue. A helical membrane pass occupies residues 669-689; sequence VIKLIALLLVIPGWLTLWIAI.

The protein belongs to the cation transport ATPase (P-type) (TC 3.A.3) family. Type IB subfamily.

It is found in the cell membrane. The catalysed reaction is Cd(2+)(in) + ATP + H2O = Cd(2+)(out) + ADP + phosphate + H(+). Its function is as follows. Couples the hydrolysis of ATP with the export of cadmium. The polypeptide is Probable cadmium-transporting ATPase (cadA) (Listeria monocytogenes).